Consider the following 715-residue polypeptide: Fatty acid oxidation complex subunit alpha (715 aa).

Positions 1 to 190 (MTTTSAFMLN…KAGLVDDVVP (190 aa)) are enoyl-CoA hydratase. A 3-hydroxyacyl-CoA dehydrogenase region spans residues 306–715 (GPLNSVGILG…WTNGETDQGN (410 aa)).

The protein in the N-terminal section; belongs to the enoyl-CoA hydratase/isomerase family. This sequence in the central section; belongs to the 3-hydroxyacyl-CoA dehydrogenase family. As to quaternary structure, heterotetramer of two alpha chains (FadJ) and two beta chains (FadI).

The protein localises to the cytoplasm. The catalysed reaction is a (3S)-3-hydroxyacyl-CoA = a (2E)-enoyl-CoA + H2O. The enzyme catalyses a 4-saturated-(3S)-3-hydroxyacyl-CoA = a (3E)-enoyl-CoA + H2O. It catalyses the reaction a (3S)-3-hydroxyacyl-CoA + NAD(+) = a 3-oxoacyl-CoA + NADH + H(+). It carries out the reaction (3S)-3-hydroxybutanoyl-CoA = (3R)-3-hydroxybutanoyl-CoA. It participates in lipid metabolism; fatty acid beta-oxidation. In terms of biological role, catalyzes the formation of a hydroxyacyl-CoA by addition of water on enoyl-CoA. Also exhibits 3-hydroxyacyl-CoA epimerase and 3-hydroxyacyl-CoA dehydrogenase activities. The sequence is that of Fatty acid oxidation complex subunit alpha from Salmonella gallinarum (strain 287/91 / NCTC 13346).